The chain runs to 633 residues: Pentatricopeptide repeat-containing protein At3g24000, mitochondrial (633 aa).

The N-terminal 63 residues, 1–63 (MALRFPPRLL…SYIPADRRFY (63 aa)), are a transit peptide targeting the mitochondrion. PPR repeat units lie at residues 94 to 124 (DIVM…MPQR), 125 to 159 (DFVT…GYSP), 160 to 194 (NEFT…GFDS), 195 to 225 (NVHV…LESR), 226 to 260 (NDVS…GFRP), 261 to 295 (SHFS…GEKL), 296 to 326 (VAFA…LAKR), 327 to 361 (DVVS…GIRP), 362 to 396 (NEIS…GIVP), and 397 to 431 (EAWH…PTAA). The type E motif stretch occupies residues 432 to 507 (IWKALLNACR…EPACSWVEIE (76 aa)). Residues 508 to 538 (NAIHMFVANDERHPQREEIARKWEEVLAKIK) form a type E(+) motif region. Positions 539-633 (ELGYVPDTSH…DGNCSCKDYW (95 aa)) are type DYW motif.

This sequence belongs to the PPR family. PCMP-H subfamily.

It localises to the mitochondrion. The chain is Pentatricopeptide repeat-containing protein At3g24000, mitochondrial (PCMP-H87) from Arabidopsis thaliana (Mouse-ear cress).